The primary structure comprises 192 residues: Molybdenum cofactor guanylyltransferase (192 aa).

GTP contacts are provided by residues 10–12, K23, N51, D69, and D99; that span reads LAG. D99 contacts Mg(2+).

The protein belongs to the MobA family. As to quaternary structure, monomer. Mg(2+) serves as cofactor.

It is found in the cytoplasm. It catalyses the reaction Mo-molybdopterin + GTP + H(+) = Mo-molybdopterin guanine dinucleotide + diphosphate. Its function is as follows. Transfers a GMP moiety from GTP to Mo-molybdopterin (Mo-MPT) cofactor (Moco or molybdenum cofactor) to form Mo-molybdopterin guanine dinucleotide (Mo-MGD) cofactor. The polypeptide is Molybdenum cofactor guanylyltransferase (Haemophilus influenzae (strain 86-028NP)).